The chain runs to 274 residues: Large ribosomal subunit protein uL2 (274 aa).

Residues 223–274 (VAMNPVDHPHGGGEGRTSGGRHPVTPWGVPTKGYKTRSNKRTDKYIVRRRNK) form a disordered region.

It belongs to the universal ribosomal protein uL2 family. As to quaternary structure, part of the 50S ribosomal subunit. Forms a bridge to the 30S subunit in the 70S ribosome.

Its function is as follows. One of the primary rRNA binding proteins. Required for association of the 30S and 50S subunits to form the 70S ribosome, for tRNA binding and peptide bond formation. It has been suggested to have peptidyltransferase activity; this is somewhat controversial. Makes several contacts with the 16S rRNA in the 70S ribosome. The protein is Large ribosomal subunit protein uL2 of Shewanella putrefaciens (strain CN-32 / ATCC BAA-453).